A 649-amino-acid chain; its full sequence is Flavin-dependent oxygenase ucdD (649 aa).

FAD is bound by residues Q92, I185, Y344, D370, and S386.

It belongs to the PheA/TfdB FAD monooxygenase family. As to quaternary structure, homodimer. Requires FAD as cofactor.

It participates in secondary metabolite biosynthesis. Its function is as follows. Nonribosomal peptide synthetase that mediates the biosynthesis of usterphenyllins and uscandidusins, p-terphenyl derivatives. Within the pathway, ucdD catalyzes the formation of 3,15-dihydroxyterphenyllin via dihydroxylation at C-3 of ring A and C-15 of ring C of the terphenyllin intermediate. The pathway begin with the biosynthesis of 4-hydroxyphenylpyruvate (HPPA) from L-tyrosine, possibly by the aminotransferase ucdG. The nonribosomal peptide synthetase ucdA then condenses two HPPA units to produce atromentin. The key step in this pathway is the reduction and dehydration of atromentin to form a terphenyl triol intermediate, performed by the NAD-dependent dehydrogenase ucdB. Further O-methylation by the methyltransferase ucdC forms terphenyllin carrying two methoxy moieties at C-9 and C-12, and subsequent dihydroxylation at C-3 of ring A and C-15 of ring C by the flavin-dependent oxygenase ucdD leads to 3,15-dihydroxyterphenyllin. Prenylation by ucdE at position C-5 of ring A forms usterphenyllin B, and is followed by a second prenylation at position C-14 of ring C to form usterphenyllin A. The following furan ring formation that leads to uscandidusins A and B was proven to be an unexpected spontaneous non-enzymatic reaction. In Aspergillus ustus, this protein is Flavin-dependent oxygenase ucdD.